We begin with the raw amino-acid sequence, 204 residues long: Cytochrome c biogenesis ATP-binding export protein CcmA (204 aa).

Positions 2-203 (LEADNLECVR…PAGTVRELRL (202 aa)) constitute an ABC transporter domain. 34–41 (GRNGAGKT) contributes to the ATP binding site.

This sequence belongs to the ABC transporter superfamily. CcmA exporter (TC 3.A.1.107) family. In terms of assembly, the complex is composed of two ATP-binding proteins (CcmA) and two transmembrane proteins (CcmB).

The protein resides in the cell inner membrane. It carries out the reaction heme b(in) + ATP + H2O = heme b(out) + ADP + phosphate + H(+). In terms of biological role, part of the ABC transporter complex CcmAB involved in the biogenesis of c-type cytochromes; once thought to export heme, this seems not to be the case, but its exact role is uncertain. Responsible for energy coupling to the transport system. This is Cytochrome c biogenesis ATP-binding export protein CcmA from Dechloromonas aromatica (strain RCB).